The primary structure comprises 296 residues: 4-hydroxy-tetrahydrodipicolinate synthase (296 aa).

Residue T49 coordinates pyruvate. Y137 serves as the catalytic Proton donor/acceptor. The active-site Schiff-base intermediate with substrate is the K166. I208 serves as a coordination point for pyruvate.

Belongs to the DapA family. In terms of assembly, homotetramer; dimer of dimers.

Its subcellular location is the cytoplasm. It carries out the reaction L-aspartate 4-semialdehyde + pyruvate = (2S,4S)-4-hydroxy-2,3,4,5-tetrahydrodipicolinate + H2O + H(+). The protein operates within amino-acid biosynthesis; L-lysine biosynthesis via DAP pathway; (S)-tetrahydrodipicolinate from L-aspartate: step 3/4. Its function is as follows. Catalyzes the condensation of (S)-aspartate-beta-semialdehyde [(S)-ASA] and pyruvate to 4-hydroxy-tetrahydrodipicolinate (HTPA). In Pelodictyon phaeoclathratiforme (strain DSM 5477 / BU-1), this protein is 4-hydroxy-tetrahydrodipicolinate synthase.